Consider the following 266-residue polypeptide: DLA class II histocompatibility antigen, DR-1 beta chain (266 aa).

The first 29 residues, 1–29 (MVCLCFLGGSWMTALMLILMVLNPPFAWA), serve as a signal peptide directing secretion. Positions 30-124 (RDTPPHFLEV…IESFTVQRRV (95 aa)) are beta-1. Residues 30–227 (RDTPPHFLEV…RAQSDSAQSK (198 aa)) lie on the Extracellular side of the membrane. 2 cysteine pairs are disulfide-bonded: Cys44–Cys108 and Cys146–Cys202. Asn48 carries N-linked (GlcNAc...) asparagine glycosylation. The segment at 125-227 (EPTVTVYPTK…RAQSDSAQSK (103 aa)) is beta-2. The region spanning 126–214 (PTVTVYPTKT…EHPSLTSPVT (89 aa)) is the Ig-like C1-type domain. The chain crosses the membrane as a helical span at residues 228–250 (MLSGIGGFVLGLLFLAVGLFIYF). Residues 251 to 266 (RNQKGHSGLQPTGLLS) lie on the Cytoplasmic side of the membrane.

It belongs to the MHC class II family.

Its subcellular location is the membrane. This chain is DLA class II histocompatibility antigen, DR-1 beta chain, found in Canis lupus familiaris (Dog).